We begin with the raw amino-acid sequence, 300 residues long: Telomere repeat-binding factor 1 (300 aa).

Residues 1–58 (MGAPKQKWTQEEESALKSGVIKHGPGKWRTILKDPEFSGVLYLRSNVDLKDKWRNMSV) form the HTH myb-type domain. The segment at residues 28–57 (WRTILKDPEFSGVLYLRSNVDLKDKWRNMS) is a DNA-binding region (H-T-H motif). Disordered stretches follow at residues 93 to 119 (LQSD…RPNV) and 185 to 213 (NSTP…PSPK). The region spanning 117 to 185 (PNVRLDSLIM…KVKRKYRIPN (69 aa)) is the H15 domain. Positions 241 to 290 (EAAAVAAQAVAEAEAAMAEAEEAAKEAEAAEAEAEAAQAFAEEASKTLKG) form a coiled coil.

This sequence belongs to the histone H1/H5 family. SMH subfamily. In terms of assembly, forms a homodimer and heterodimers with TRB2 or TRB3. Interacts with POT1b, TRB2 and TRB3 through its H15 domain.

The protein resides in the nucleus. The protein localises to the nucleolus. It is found in the chromosome. Binds preferentially double-stranded telomeric repeats. The sequence is that of Telomere repeat-binding factor 1 (TRB1) from Arabidopsis thaliana (Mouse-ear cress).